The following is a 1092-amino-acid chain: Isoleucine--tRNA ligase (1092 aa).

The short motif at 53-63 (PFANGLPHYGH) is the 'HIGH' region element. The 'KMSKS' region motif lies at 613-617 (KLSKR). Residue lysine 616 coordinates ATP.

Belongs to the class-I aminoacyl-tRNA synthetase family. IleS type 2 subfamily. As to quaternary structure, monomer. The cofactor is Zn(2+).

The protein resides in the cytoplasm. The enzyme catalyses tRNA(Ile) + L-isoleucine + ATP = L-isoleucyl-tRNA(Ile) + AMP + diphosphate. Catalyzes the attachment of isoleucine to tRNA(Ile). As IleRS can inadvertently accommodate and process structurally similar amino acids such as valine, to avoid such errors it has two additional distinct tRNA(Ile)-dependent editing activities. One activity is designated as 'pretransfer' editing and involves the hydrolysis of activated Val-AMP. The other activity is designated 'posttransfer' editing and involves deacylation of mischarged Val-tRNA(Ile). This is Isoleucine--tRNA ligase from Rickettsia peacockii (strain Rustic).